Here is a 219-residue protein sequence, read N- to C-terminus: Lipoprotein-releasing system ATP-binding protein LolD (219 aa).

The region spanning Leu5 to Ile219 is the ABC transporter domain. Gly37–Ser44 provides a ligand contact to ATP.

It belongs to the ABC transporter superfamily. Lipoprotein translocase (TC 3.A.1.125) family. As to quaternary structure, the complex is composed of two ATP-binding proteins (LolD) and two transmembrane proteins (LolC and LolE).

It localises to the cell inner membrane. Functionally, part of the ABC transporter complex LolCDE involved in the translocation of mature outer membrane-directed lipoproteins, from the inner membrane to the periplasmic chaperone, LolA. Responsible for the formation of the LolA-lipoprotein complex in an ATP-dependent manner. The polypeptide is Lipoprotein-releasing system ATP-binding protein LolD (Cytophaga hutchinsonii (strain ATCC 33406 / DSM 1761 / CIP 103989 / NBRC 15051 / NCIMB 9469 / D465)).